Here is a 459-residue protein sequence, read N- to C-terminus: Putrescine aminotransferase (459 aa).

Pyridoxal 5'-phosphate contacts are provided by residues 150 to 151 (GT) and Q274. N6-(pyridoxal phosphate)lysine is present on K300. Pyridoxal 5'-phosphate is bound at residue T332.

The protein belongs to the class-III pyridoxal-phosphate-dependent aminotransferase family. Putrescine aminotransferase subfamily. It depends on pyridoxal 5'-phosphate as a cofactor.

The catalysed reaction is an alkane-alpha,omega-diamine + 2-oxoglutarate = an omega-aminoaldehyde + L-glutamate. It catalyses the reaction putrescine + 2-oxoglutarate = 1-pyrroline + L-glutamate + H2O. It carries out the reaction cadaverine + 2-oxoglutarate = 5-aminopentanal + L-glutamate. Its pathway is amine and polyamine degradation; putrescine degradation; 4-aminobutanal from putrescine (transaminase route): step 1/1. Catalyzes the aminotransferase reaction from putrescine to 2-oxoglutarate, leading to glutamate and 4-aminobutanal, which spontaneously cyclizes to form 1-pyrroline. This is the first step in one of two pathways for putrescine degradation, where putrescine is converted into 4-aminobutanoate (gamma-aminobutyrate or GABA) via 4-aminobutanal. Also functions as a cadaverine transaminase in a a L-lysine degradation pathway to succinate that proceeds via cadaverine, glutarate and L-2-hydroxyglutarate. This chain is Putrescine aminotransferase, found in Escherichia fergusonii (strain ATCC 35469 / DSM 13698 / CCUG 18766 / IAM 14443 / JCM 21226 / LMG 7866 / NBRC 102419 / NCTC 12128 / CDC 0568-73).